The chain runs to 264 residues: ATP synthase subunit a (264 aa).

A run of 7 helical transmembrane segments spans residues 29 to 49 (TWHIDSLLFSVGLGVLFLWIF), 90 to 110 (IAPLALTIFVWVFMMNFMDMI), 111 to 131 (PVDWLPSLALLAGVEYLKVVP), 134 to 154 (DVNITFSLAIGVFVLIIYYSI), 177 to 197 (IPVNLLLESVTLIAKPISLAL), 208 to 228 (LIFILIALMYSANWAMATLGV), and 235 to 255 (LIFHILVITLQAFIFMMLTIV).

It belongs to the ATPase A chain family. F-type ATPases have 2 components, CF(1) - the catalytic core - and CF(0) - the membrane proton channel. CF(1) has five subunits: alpha(3), beta(3), gamma(1), delta(1), epsilon(1). CF(0) has three main subunits: a(1), b(2) and c(9-12). The alpha and beta chains form an alternating ring which encloses part of the gamma chain. CF(1) is attached to CF(0) by a central stalk formed by the gamma and epsilon chains, while a peripheral stalk is formed by the delta and b chains.

The protein localises to the cell inner membrane. In terms of biological role, key component of the proton channel; it plays a direct role in the translocation of protons across the membrane. The chain is ATP synthase subunit a from Shewanella denitrificans (strain OS217 / ATCC BAA-1090 / DSM 15013).